A 426-amino-acid polypeptide reads, in one-letter code: MLDVKVLRQDLEEVKRRLAHRNEDISALDQFVEVDEKRREVIQEAEALKNKRNTVSEQVAVMKRNKENADHLIAEMKEVNERIKALDEELRQLDEQLEFILLSLPNLPHESTPIGTTEDDNVIAWTWGEPRAFDFEIKPHWELASQAGILDFETAAKVTGSRFVFYKGLGARLERALMNFMMDLHSNEHGYEEVIPPFIVNRTSMTGTGQLPKFEEDAFKIEGPDYFLIPTAEVPVTNMHRDEIMDGADLPRYYTAFSACFRSEAGSAGRDTRGLIRQHQFNKVELVKFVKPEESYDELDKLVKNAEKVLQLLGLPYRVLSMCTGDLGFTAAKKFDIEVWIPSGDTYREISSCSNFEDFQARRANIRFRRDTKSKPEFVHTLNGSGLAIGRTVAAILENYQEADGAIVIPEVLRPYMGGVDKIAPK.

231-233 (TAE) is a binding site for L-serine. An ATP-binding site is contributed by 262-264 (RSE). An L-serine-binding site is contributed by Glu285. ATP is bound at residue 349-352 (EISS). Ser385 provides a ligand contact to L-serine.

This sequence belongs to the class-II aminoacyl-tRNA synthetase family. Type-1 seryl-tRNA synthetase subfamily. Homodimer. The tRNA molecule binds across the dimer.

Its subcellular location is the cytoplasm. The catalysed reaction is tRNA(Ser) + L-serine + ATP = L-seryl-tRNA(Ser) + AMP + diphosphate + H(+). It catalyses the reaction tRNA(Sec) + L-serine + ATP = L-seryl-tRNA(Sec) + AMP + diphosphate + H(+). It participates in aminoacyl-tRNA biosynthesis; selenocysteinyl-tRNA(Sec) biosynthesis; L-seryl-tRNA(Sec) from L-serine and tRNA(Sec): step 1/1. In terms of biological role, catalyzes the attachment of serine to tRNA(Ser). Is also able to aminoacylate tRNA(Sec) with serine, to form the misacylated tRNA L-seryl-tRNA(Sec), which will be further converted into selenocysteinyl-tRNA(Sec). This Brevibacillus brevis (strain 47 / JCM 6285 / NBRC 100599) protein is Serine--tRNA ligase.